The primary structure comprises 169 residues: Putative cysteine protease YraA (169 aa).

The PfpI endopeptidase domain maps to 3–169 (KKIAVLVTDQ…FNRESLNLLK (167 aa)). Catalysis depends on cysteine 103, which acts as the Nucleophile. The active site involves histidine 104.

It belongs to the peptidase C56 family.

Functionally, functions in the protection against aldehyde-stress, possibly by degrading damaged proteins. This Bacillus subtilis (strain 168) protein is Putative cysteine protease YraA (yraA).